Consider the following 429-residue polypeptide: Protein S-Myc (429 aa).

Tyr36 carries the post-translational modification Phosphotyrosine; by Tyr-kinases. The interval 301-325 (PLPYAEDARPLKKPRSQDPLGPLKC) is disordered. Residues 346-398 (ERRRNHNRMERQRRDIMRSSFLNLRDLVPELVHNEKAAKVVILKKATEYIHTL) enclose the bHLH domain. Residues 398–419 (LQTDESKLLVEREKLYERKQQL) form a leucine-zipper region.

Efficient DNA binding requires dimerization with another bHLH protein.

It is found in the nucleus. In terms of biological role, has apoptosis-inducing activity. This Rattus norvegicus (Rat) protein is Protein S-Myc (Mycs).